A 208-amino-acid chain; its full sequence is Uracil phosphoribosyltransferase (208 aa).

5-phospho-alpha-D-ribose 1-diphosphate is bound by residues R77, R102, and 129 to 137 (DPMLATGNS). Uracil-binding positions include I193 and 198–200 (GDA). Residue D199 coordinates 5-phospho-alpha-D-ribose 1-diphosphate.

The protein belongs to the UPRTase family. Mg(2+) serves as cofactor.

The enzyme catalyses UMP + diphosphate = 5-phospho-alpha-D-ribose 1-diphosphate + uracil. Its pathway is pyrimidine metabolism; UMP biosynthesis via salvage pathway; UMP from uracil: step 1/1. Its activity is regulated as follows. Allosterically activated by GTP. Its function is as follows. Catalyzes the conversion of uracil and 5-phospho-alpha-D-ribose 1-diphosphate (PRPP) to UMP and diphosphate. The sequence is that of Uracil phosphoribosyltransferase from Mycoplasmopsis agalactiae (strain NCTC 10123 / CIP 59.7 / PG2) (Mycoplasma agalactiae).